A 447-amino-acid chain; its full sequence is Methionine aminopeptidase 2-2 (447 aa).

A disordered region spans residues Met-1 to Pro-89. Positions Asn-15 to Gly-30 are enriched in polar residues. Over residues Asp-34 to Asp-47 the composition is skewed to acidic residues. A compositionally biased stretch (basic residues) spans Lys-59–Ala-73. His-197 contacts substrate. Positions 217, 228, and 297 each coordinate a divalent metal cation. Position 305 (His-305) interacts with substrate. A divalent metal cation contacts are provided by Glu-333 and Glu-428.

The protein belongs to the peptidase M24A family. Methionine aminopeptidase eukaryotic type 2 subfamily. Requires Co(2+) as cofactor. It depends on Zn(2+) as a cofactor. The cofactor is Mn(2+). Fe(2+) is required as a cofactor.

It localises to the cytoplasm. It carries out the reaction Release of N-terminal amino acids, preferentially methionine, from peptides and arylamides.. Cotranslationally removes the N-terminal methionine from nascent proteins. The N-terminal methionine is often cleaved when the second residue in the primary sequence is small and uncharged (Met-Ala-, Cys, Gly, Pro, Ser, Thr, or Val). This Arthroderma otae (strain ATCC MYA-4605 / CBS 113480) (Microsporum canis) protein is Methionine aminopeptidase 2-2.